The chain runs to 160 residues: Cytochrome b6-f complex subunit 4 (160 aa).

3 consecutive transmembrane segments (helical) span residues 36 to 56 (LLYI…GLAV), 95 to 115 (LLGI…PFIE), and 131 to 151 (SVFL…CLPI).

It belongs to the cytochrome b family. PetD subfamily. In terms of assembly, the 4 large subunits of the cytochrome b6-f complex are cytochrome b6, subunit IV (17 kDa polypeptide, PetD), cytochrome f and the Rieske protein, while the 4 small subunits are PetG, PetL, PetM and PetN. The complex functions as a dimer.

It is found in the cellular thylakoid membrane. In terms of biological role, component of the cytochrome b6-f complex, which mediates electron transfer between photosystem II (PSII) and photosystem I (PSI), cyclic electron flow around PSI, and state transitions. This chain is Cytochrome b6-f complex subunit 4, found in Prochlorococcus marinus subsp. pastoris (strain CCMP1986 / NIES-2087 / MED4).